A 360-amino-acid chain; its full sequence is U7 snRNA-associated Sm-like protein LSm11 (360 aa).

The segment at 1–29 (MEERERGARSAGAGSPARPPSPRLDVSSD) is disordered. Phosphoserine is present on residues S15 and S21. The residue at position 41 (R41) is an Omega-N-methylarginine. Residues 68–143 (RGGGRGRGRA…PGRSRKAPRN (76 aa)) form a disordered region. Over residues 78–94 (RGAAAGSGVPAAPGPSG) the composition is skewed to low complexity. K120 is covalently cross-linked (Glycyl lysine isopeptide (Lys-Gly) (interchain with G-Cter in SUMO2)). At S154 the chain carries Phosphoserine. The region spanning 154-229 (SPLGELHRCI…LTLTRLFDRL (76 aa)) is the Sm domain. The tract at residues 171-204 (VHIRTFKGLRGVCTGFLVAFDKFWNMALTDVDET) is SM 1. The interval 268 to 333 (ADTGRGSHKR…SRKKKRKPKV (66 aa)) is disordered. Residue S280 is modified to Phosphoserine. Residues 299-322 (GRTTRTDGSSVGGTFSRATTLSRG) are compositionally biased toward polar residues. The tract at residues 343 to 356 (INQIFIRGENVLLV) is SM 2.

It belongs to the snRNP Sm proteins family. As to quaternary structure, component of the heptameric ring U7 snRNP complex, or U7 Sm protein core complex, at least composed of LSM10, LSM11, SNRPB, SNRPD3, SNRPE, SNRPF, SNRPG and U7 snRNA. Formation of the U7 snRNP is an ATP-dependent process mediated by a specialized SMN complex containing at least the Sm protein core complex and additionally, the U7-specific LSM10 and LSM11 proteins. Identified in a histone pre-mRNA complex, at least composed of ERI1, LSM11, SLBP, SNRPB, SYNCRIP and YBX1. Interacts (via the Sm domains) with CLNS1A. Interacts with SMN and ZNF473. Interacts with PRMT5 and WDR77.

Its subcellular location is the nucleus. In terms of biological role, component of the U7 snRNP complex that is involved in the histone 3'-end pre-mRNA processing. Increases U7 snRNA levels but not histone 3'-end pre-mRNA processing activity, when overexpressed. Required for cell cycle progression from G1 to S phases. Binds specifically to the Sm-binding site of U7 snRNA. This Homo sapiens (Human) protein is U7 snRNA-associated Sm-like protein LSm11.